The primary structure comprises 545 residues: Pectinesterase/pectinesterase inhibitor (545 aa).

Residues 1 to 37 form the signal peptide; the sequence is MEINQPNLLEASKSCYSKITFFLLVISFAALVSTGFS. Positions 38-191 are pectinesterase inhibitor; sequence SPELSLHHKI…ILRARTSLAI (154 aa). Positions 38-228 are excised as a propeptide; that stretch reads SPELSLHHKI…RRLLQTLGKD (191 aa). N-linked (GlcNAc...) asparagine glycosylation is present at Asn135. The pectinesterase stretch occupies residues 232–530; the sequence is DIVVAKDGSG…TVAELIQGGS (299 aa). Substrate-binding residues include Thr307 and Gln337. Cys326 and Cys353 are oxidised to a cystine. Catalysis depends on Asp360, which acts as the Proton donor; for pectinesterase activity. An N-linked (GlcNAc...) (complex) asparagine glycan is attached at Asn375. Asp381 serves as the catalytic Nucleophile; for pectinesterase activity. Cys394 and Cys428 are disulfide-bonded. Substrate is bound by residues Arg449 and Trp451.

In the N-terminal section; belongs to the PMEI family. The protein in the C-terminal section; belongs to the pectinesterase family. In terms of processing, N-glycosylated.

It localises to the secreted. The protein localises to the cell wall. It carries out the reaction [(1-&gt;4)-alpha-D-galacturonosyl methyl ester](n) + n H2O = [(1-&gt;4)-alpha-D-galacturonosyl](n) + n methanol + n H(+). It participates in glycan metabolism; pectin degradation; 2-dehydro-3-deoxy-D-gluconate from pectin: step 1/5. Functionally, acts in the modification of cell walls via demethylesterification of cell wall pectin. This chain is Pectinesterase/pectinesterase inhibitor, found in Ficus pumila var. awkeotsang (Jelly fig).